The chain runs to 83 residues: U5-theraphotoxin-Hs1a 6 (83 aa).

The first 21 residues, 1-21, serve as a signal peptide directing secretion; the sequence is MKTSMFLTLTGLVLLFVVCYA. Positions 22 to 49 are excised as a propeptide; that stretch reads SESEEKEFPKELLSSIFAADSDFKVEER. 3 cysteine pairs are disulfide-bonded: cysteine 51–cysteine 63, cysteine 56–cysteine 68, and cysteine 62–cysteine 75.

Belongs to the neurotoxin 10 (Hwtx-1) family. 51 (Hntx-8) subfamily. Hntx-8 sub-subfamily. As to expression, expressed by the venom gland.

Its subcellular location is the secreted. Its function is as follows. Agglutinates erythrocytes. This Cyriopagopus schmidti (Chinese bird spider) protein is U5-theraphotoxin-Hs1a 6.